A 504-amino-acid polypeptide reads, in one-letter code: 2,3-bisphosphoglycerate-independent phosphoglycerate mutase (504 aa).

The Mn(2+) site is built by D11 and S61. S61 functions as the Phosphoserine intermediate in the catalytic mechanism. Substrate contacts are provided by residues H122, 152–153 (RD), R183, R189, 255–258 (RNDR), and K329. Residues D396, H400, D437, H438, and H455 each coordinate Mn(2+).

The protein belongs to the BPG-independent phosphoglycerate mutase family. In terms of assembly, monomer. Mn(2+) is required as a cofactor.

The enzyme catalyses (2R)-2-phosphoglycerate = (2R)-3-phosphoglycerate. Its pathway is carbohydrate degradation; glycolysis; pyruvate from D-glyceraldehyde 3-phosphate: step 3/5. Catalyzes the interconversion of 2-phosphoglycerate and 3-phosphoglycerate. The chain is 2,3-bisphosphoglycerate-independent phosphoglycerate mutase from Bacteroides fragilis (strain ATCC 25285 / DSM 2151 / CCUG 4856 / JCM 11019 / LMG 10263 / NCTC 9343 / Onslow / VPI 2553 / EN-2).